A 392-amino-acid chain; its full sequence is Phosphoglycerate kinase (392 aa).

Substrate is bound by residues 21-23 (DMN), R36, 59-62 (HLGR), R114, and R147. Residues K198, E320, and 346 to 349 (GGDT) contribute to the ATP site.

Belongs to the phosphoglycerate kinase family. Monomer.

It is found in the cytoplasm. The catalysed reaction is (2R)-3-phosphoglycerate + ATP = (2R)-3-phospho-glyceroyl phosphate + ADP. It participates in carbohydrate degradation; glycolysis; pyruvate from D-glyceraldehyde 3-phosphate: step 2/5. In Neisseria meningitidis serogroup B (strain ATCC BAA-335 / MC58), this protein is Phosphoglycerate kinase (pgk).